The following is a 307-amino-acid chain: Protoheme IX farnesyltransferase (307 aa).

9 helical membrane-spanning segments follow: residues Val-31–Val-51, Trp-53–Ile-73, Thr-103–Asn-123, Leu-125–Leu-145, Ile-153–Gly-173, Ala-179–Leu-199, Leu-223–Tyr-243, Ser-246–Trp-266, and Ile-285–Pro-305.

This sequence belongs to the UbiA prenyltransferase family. Protoheme IX farnesyltransferase subfamily.

It is found in the cell inner membrane. It carries out the reaction heme b + (2E,6E)-farnesyl diphosphate + H2O = Fe(II)-heme o + diphosphate. The protein operates within porphyrin-containing compound metabolism; heme O biosynthesis; heme O from protoheme: step 1/1. In terms of biological role, converts heme B (protoheme IX) to heme O by substitution of the vinyl group on carbon 2 of heme B porphyrin ring with a hydroxyethyl farnesyl side group. The chain is Protoheme IX farnesyltransferase from Cupriavidus taiwanensis (strain DSM 17343 / BCRC 17206 / CCUG 44338 / CIP 107171 / LMG 19424 / R1) (Ralstonia taiwanensis (strain LMG 19424)).